The following is a 334-amino-acid chain: Anthranilate phosphoribosyltransferase (334 aa).

5-phospho-alpha-D-ribose 1-diphosphate-binding positions include glycine 79, 82–83 (GD), serine 87, 89–92 (NIST), 107–115 (KAGNRSISS), and serine 119. Anthranilate is bound at residue glycine 79. Serine 91 contributes to the Mg(2+) binding site. Asparagine 110 is an anthranilate binding site. Arginine 165 contributes to the anthranilate binding site. Residues aspartate 224 and glutamate 225 each coordinate Mg(2+).

It belongs to the anthranilate phosphoribosyltransferase family. As to quaternary structure, homodimer. Requires Mg(2+) as cofactor.

It carries out the reaction N-(5-phospho-beta-D-ribosyl)anthranilate + diphosphate = 5-phospho-alpha-D-ribose 1-diphosphate + anthranilate. Its pathway is amino-acid biosynthesis; L-tryptophan biosynthesis; L-tryptophan from chorismate: step 2/5. Functionally, catalyzes the transfer of the phosphoribosyl group of 5-phosphorylribose-1-pyrophosphate (PRPP) to anthranilate to yield N-(5'-phosphoribosyl)-anthranilate (PRA). The sequence is that of Anthranilate phosphoribosyltransferase from Streptococcus thermophilus (strain ATCC BAA-491 / LMD-9).